We begin with the raw amino-acid sequence, 381 residues long: Prostatic acid phosphatase (381 aa).

The signal sequence occupies residues 1 to 31 (MRAVPLHLVGTASLTLGFLLLLSLRLDPGQA). Arg-42 contributes to the substrate binding site. The active-site Nucleophile is His-43. Arg-46 contributes to the substrate binding site. A glycan (N-linked (GlcNAc...) asparagine) is linked at Asn-93. Arg-110 is a substrate binding site. 3 disulfides stabilise this stretch: Cys-160-Cys-371, Cys-214-Cys-312, and Cys-346-Cys-350. N-linked (GlcNAc...) asparagine glycosylation occurs at Asn-219. Residue His-288 participates in substrate binding. The Proton donor role is filled by Asp-289. N-linked (GlcNAc...) asparagine glycosylation occurs at Asn-332.

Belongs to the histidine acid phosphatase family. In terms of assembly, homodimer; dimer formation is required for phosphatase activity. In terms of processing, N-glycosylated. In terms of tissue distribution, expressed in prostate epithelium. Also expressed in the pelvic nerve and sacral spinal cord. Localizes in peptidergic and non-peptidergic nociceptive (pain-sensing) neurons.

The protein resides in the secreted. The protein localises to the cell membrane. Its subcellular location is the lysosome membrane. The enzyme catalyses a phosphate monoester + H2O = an alcohol + phosphate. The catalysed reaction is a ribonucleoside 5'-phosphate + H2O = a ribonucleoside + phosphate. It catalyses the reaction 1-(9Z-octadecenoyl)-sn-glycero-3-phosphate + H2O = 1-(9Z-octadecenoyl)-sn-glycerol + phosphate. It carries out the reaction O-phospho-L-tyrosyl-[protein] + H2O = L-tyrosyl-[protein] + phosphate. Inhibited by L(+)-tartrate. Its function is as follows. A non-specific tyrosine phosphatase that dephosphorylates a diverse number of substrates under acidic conditions (pH 4-6) including alkyl, aryl, and acyl orthophosphate monoesters and phosphorylated proteins. Has lipid phosphatase activity and inactivates lysophosphatidic acid in seminal plasma. In terms of biological role, in addition to its tyrosine phosphatase activity, also has ecto-5'-nucleotidase activity in dorsal root ganglion (DRG) neurons. Generates adenosine from AMP. This extracellular adenosine leads to a decrease in chronic pain by activating A1R in nociceptive neurons. The chain is Prostatic acid phosphatase (Acp3) from Rattus norvegicus (Rat).